We begin with the raw amino-acid sequence, 361 residues long: MVHAEAFSRPLSRNEVVGLIFRLTIFGAVTYFTIKWMVDAIDPTRKQKVEAQKQAEKLMKQIGVKNVKLSEYEMSIAAHLVDPLNMHVTWSDIAGLDDVITDLKDTVILPIKKKHLFENSRLLQPPKGVLLYGPPGCGKTLIAKATAKEAGCRFINLQPSTLTDKWYGESQKLAAAVFSLAIKLQPSIIFIDEIDSFLRNRSSSDHEATAMMKAQFMSLWDGLDTDHSCQVIVMGATNRPQDLDSAIMRRMPTRFHINQPALKQREAILKLILKNENVDRHVDLLEVAQETDGFSGSDLKEMCRDAALLCVREYVNSTSEESHDEDEIRPVQQQDLHRAIEKMKKSKDAAFQSVLTHVCLD.

Topologically, residues 1-15 are mitochondrial intermembrane; it reads MVHAEAFSRPLSRNE. Residues 16–32 traverse the membrane as a helical segment; sequence VVGLIFRLTIFGAVTYF. At 33–361 the chain is on the cytoplasmic side; that stretch reads TIKWMVDAID…QSVLTHVCLD (329 aa). ATP is bound at residue 133–140; that stretch reads GPPGCGKT. Ser-322 carries the phosphoserine modification.

The protein belongs to the AAA ATPase family. MSP1 subfamily. Interacts with GRIA2 and GRIP1 in an ATP-dependent manner. ATAD1-catalyzed ATP hydrolysis disrupts not only its binding to GRIA2 and GRIP1, but also interaction between GRIP1 and GRIA2, leading to AMPAR complex disassembly.

It localises to the mitochondrion outer membrane. It is found in the peroxisome membrane. The protein resides in the postsynaptic cell membrane. The catalysed reaction is [protein]-with a C-terminal TM segment(out) + ATP + H2O = [protein]-with a C-terminal TM segment(in) + ADP + phosphate + H(+). In terms of biological role, outer mitochondrial translocase required to remove mislocalized tail-anchored transmembrane proteins on mitochondria. Specifically recognizes and binds tail-anchored transmembrane proteins: acts as a dislocase that mediates the ATP-dependent extraction of mistargeted tail-anchored transmembrane proteins from the mitochondrion outer membrane. Also plays a critical role in regulating the surface expression of AMPA receptors (AMPAR), thereby regulating synaptic plasticity and learning and memory. Required for NMDA-stimulated AMPAR internalization and inhibition of GRIA1 and GRIA2 recycling back to the plasma membrane; these activities are ATPase-dependent. The chain is Outer mitochondrial transmembrane helix translocase from Rattus norvegicus (Rat).